The chain runs to 245 residues: Probable phosphatase YcdX (245 aa).

H7, H9, H15, H40, E73, H101, H131, D192, and H194 together coordinate Zn(2+).

This sequence belongs to the PHP family. As to quaternary structure, homotrimer. It depends on Zn(2+) as a cofactor.

This is Probable phosphatase YcdX from Salmonella agona (strain SL483).